Reading from the N-terminus, the 414-residue chain is Serine hydroxymethyltransferase (414 aa).

(6S)-5,6,7,8-tetrahydrofolate-binding positions include leucine 117 and glycine 121 to leucine 123. At lysine 226 the chain carries N6-(pyridoxal phosphate)lysine. Serine 349–phenylalanine 351 is a binding site for (6S)-5,6,7,8-tetrahydrofolate.

It belongs to the SHMT family. As to quaternary structure, homodimer. The cofactor is pyridoxal 5'-phosphate.

It localises to the cytoplasm. The enzyme catalyses (6R)-5,10-methylene-5,6,7,8-tetrahydrofolate + glycine + H2O = (6S)-5,6,7,8-tetrahydrofolate + L-serine. It functions in the pathway one-carbon metabolism; tetrahydrofolate interconversion. The protein operates within amino-acid biosynthesis; glycine biosynthesis; glycine from L-serine: step 1/1. Functionally, catalyzes the reversible interconversion of serine and glycine with tetrahydrofolate (THF) serving as the one-carbon carrier. Also exhibits THF-independent aldolase activity toward beta-hydroxyamino acids, producing glycine and aldehydes, via a retro-aldol mechanism. This is Serine hydroxymethyltransferase from Methanospirillum hungatei JF-1 (strain ATCC 27890 / DSM 864 / NBRC 100397 / JF-1).